Here is a 90-residue protein sequence, read N- to C-terminus: Probable Fe(2+)-trafficking protein (90 aa).

The protein belongs to the Fe(2+)-trafficking protein family. In terms of assembly, monomer.

Functionally, could be a mediator in iron transactions between iron acquisition and iron-requiring processes, such as synthesis and/or repair of Fe-S clusters in biosynthetic enzymes. This Pectobacterium carotovorum subsp. carotovorum (strain PC1) protein is Probable Fe(2+)-trafficking protein.